We begin with the raw amino-acid sequence, 313 residues long: Ornithine carbamoyltransferase (313 aa).

Residues 57 to 60 (STRT), Arg108, and 135 to 138 (HPTQ) each bind carbamoyl phosphate. L-ornithine contacts are provided by residues Asn167, Asp231, and 235–236 (SM). Carbamoyl phosphate contacts are provided by residues 272 to 273 (CL) and Arg300.

This sequence belongs to the aspartate/ornithine carbamoyltransferase superfamily. OTCase family.

The protein resides in the cytoplasm. It carries out the reaction carbamoyl phosphate + L-ornithine = L-citrulline + phosphate + H(+). It participates in amino-acid biosynthesis; L-arginine biosynthesis; L-arginine from L-ornithine and carbamoyl phosphate: step 1/3. Reversibly catalyzes the transfer of the carbamoyl group from carbamoyl phosphate (CP) to the N(epsilon) atom of ornithine (ORN) to produce L-citrulline. The sequence is that of Ornithine carbamoyltransferase from Thermotoga petrophila (strain ATCC BAA-488 / DSM 13995 / JCM 10881 / RKU-1).